A 149-amino-acid chain; its full sequence is Large ribosomal subunit protein bL9 (149 aa).

It belongs to the bacterial ribosomal protein bL9 family.

Its function is as follows. Binds to the 23S rRNA. In Xanthomonas oryzae pv. oryzae (strain MAFF 311018), this protein is Large ribosomal subunit protein bL9.